Here is a 180-residue protein sequence, read N- to C-terminus: Oligoribonuclease (180 aa).

One can recognise an Exonuclease domain in the interval 7 to 170 (LIWIDLEMTG…DDIRESIAEL (164 aa)). Residue Tyr-128 is part of the active site.

The protein belongs to the oligoribonuclease family.

It is found in the cytoplasm. Functionally, 3'-to-5' exoribonuclease specific for small oligoribonucleotides. In Ectopseudomonas mendocina (strain ymp) (Pseudomonas mendocina), this protein is Oligoribonuclease.